A 438-amino-acid chain; its full sequence is UPF0229 protein NGR_c12350 (438 aa).

The span at 1–16 (MPNFIDRRLNPKDKSL) shows a compositional bias: basic and acidic residues. Disordered stretches follow at residues 1-20 (MPNF…GNRQ) and 83-107 (FAAG…GTGQ). Residues 94–105 (SGGGATGAGAGT) are compositionally biased toward gly residues.

This sequence belongs to the UPF0229 family.

This chain is UPF0229 protein NGR_c12350, found in Sinorhizobium fredii (strain NBRC 101917 / NGR234).